A 311-amino-acid polypeptide reads, in one-letter code: Nod factor export ATP-binding protein I (311 aa).

Residues 13–243 enclose the ABC transporter domain; the sequence is IDLAGVSKSY…QIGCPVIEIY (231 aa). 45–52 is an ATP binding site; sequence GPNGAGKS.

The protein belongs to the ABC transporter superfamily. Lipooligosaccharide exporter (TC 3.A.1.102) family. As to quaternary structure, the complex is composed of two ATP-binding proteins (NodI) and two transmembrane proteins (NodJ).

Its subcellular location is the cell inner membrane. Part of the ABC transporter complex NodIJ involved in the export of the nodulation factors (Nod factors), the bacterial signal molecules that induce symbiosis and subsequent nodulation induction. Nod factors are LCO (lipo-chitin oligosaccharide), a modified beta-1,4-linked N-acetylglucosamine oligosaccharide. This subunit is responsible for energy coupling to the transport system. This is Nod factor export ATP-binding protein I from Rhizobium leguminosarum bv. viciae.